The following is a 328-amino-acid chain: Biotin synthase (328 aa).

The region spanning 49–273 (FNKEKIETCS…ICISRIIMPE (225 aa)) is the Radical SAM core domain. Residues Cys-67, Cys-71, and Cys-74 each contribute to the [4Fe-4S] cluster site. The [2Fe-2S] cluster site is built by Ser-110, Cys-142, Cys-201, and Arg-277.

Belongs to the radical SAM superfamily. Biotin synthase family. In terms of assembly, homodimer. The cofactor is [4Fe-4S] cluster. [2Fe-2S] cluster is required as a cofactor.

The catalysed reaction is (4R,5S)-dethiobiotin + (sulfur carrier)-SH + 2 reduced [2Fe-2S]-[ferredoxin] + 2 S-adenosyl-L-methionine = (sulfur carrier)-H + biotin + 2 5'-deoxyadenosine + 2 L-methionine + 2 oxidized [2Fe-2S]-[ferredoxin]. The protein operates within cofactor biosynthesis; biotin biosynthesis; biotin from 7,8-diaminononanoate: step 2/2. In terms of biological role, catalyzes the conversion of dethiobiotin (DTB) to biotin by the insertion of a sulfur atom into dethiobiotin via a radical-based mechanism. This is Biotin synthase from Methanococcus vannielii (strain ATCC 35089 / DSM 1224 / JCM 13029 / OCM 148 / SB).